The chain runs to 152 residues: Endoribonuclease YbeY (152 aa).

Residues His-113, His-117, and His-123 each contribute to the Zn(2+) site.

It belongs to the endoribonuclease YbeY family. It depends on Zn(2+) as a cofactor.

It is found in the cytoplasm. In terms of biological role, single strand-specific metallo-endoribonuclease involved in late-stage 70S ribosome quality control and in maturation of the 3' terminus of the 16S rRNA. This is Endoribonuclease YbeY from Paracidovorax citrulli (strain AAC00-1) (Acidovorax citrulli).